The primary structure comprises 441 residues: UDP-N-acetylmuramoylalanine--D-glutamate ligase (441 aa).

113–119 (GSNAKST) is an ATP binding site.

The protein belongs to the MurCDEF family.

The protein localises to the cytoplasm. The enzyme catalyses UDP-N-acetyl-alpha-D-muramoyl-L-alanine + D-glutamate + ATP = UDP-N-acetyl-alpha-D-muramoyl-L-alanyl-D-glutamate + ADP + phosphate + H(+). The protein operates within cell wall biogenesis; peptidoglycan biosynthesis. Cell wall formation. Catalyzes the addition of glutamate to the nucleotide precursor UDP-N-acetylmuramoyl-L-alanine (UMA). This Alcanivorax borkumensis (strain ATCC 700651 / DSM 11573 / NCIMB 13689 / SK2) protein is UDP-N-acetylmuramoylalanine--D-glutamate ligase.